The primary structure comprises 271 residues: Indole-3-glycerol phosphate synthase (271 aa).

This sequence belongs to the TrpC family.

The catalysed reaction is 1-(2-carboxyphenylamino)-1-deoxy-D-ribulose 5-phosphate + H(+) = (1S,2R)-1-C-(indol-3-yl)glycerol 3-phosphate + CO2 + H2O. It functions in the pathway amino-acid biosynthesis; L-tryptophan biosynthesis; L-tryptophan from chorismate: step 4/5. This Lachnoclostridium phytofermentans (strain ATCC 700394 / DSM 18823 / ISDg) (Clostridium phytofermentans) protein is Indole-3-glycerol phosphate synthase.